Consider the following 179-residue polypeptide: DELTA-miturgitoxin-Cp2a (179 aa).

A signal peptide spans 1–20 (MKFSLFFGVLFLAILHSCLS). A propeptide spanning residues 21 to 47 (ESEKDLTDEDHFRSSDSFLSEIQEESR) is cleaved from the precursor. The Processing quadruplet motif motif lies at 44–47 (EESR). 8 disulfide bridges follow: Cys-51–Cys-66, Cys-58–Cys-75, Cys-65–Cys-88, Cys-77–Cys-86, Cys-115–Cys-130, Cys-122–Cys-139, Cys-129–Cys-158, and Cys-141–Cys-156. Val-178 bears the Valine amide mark.

Belongs to the spider toxin CSTX family. Double-CSTX subfamily. Post-translationally, cleavage of the propeptide depends on the processing quadruplet motif (XXXR, with at least one of X being E). In terms of tissue distribution, expressed by the venom gland.

It localises to the secreted. Spider venom toxin that exhibits cytolytic activity by forming an alpha-helix across the membrane. Lethal to insect larvae. The polypeptide is DELTA-miturgitoxin-Cp2a (Cheiracanthium punctorium (Yellow sac spider)).